The chain runs to 85 residues: Large ribosomal subunit protein bL27 (85 aa).

The segment at 1 to 21 (MAHKKGVGSTRNGRDSESKRL) is disordered.

This sequence belongs to the bacterial ribosomal protein bL27 family.

The polypeptide is Large ribosomal subunit protein bL27 (Geobacter sulfurreducens (strain ATCC 51573 / DSM 12127 / PCA)).